Here is a 122-residue protein sequence, read N- to C-terminus: Small ribosomal subunit protein uS13 (122 aa).

Positions 97 to 122 (PVRGQKTKSNARTRKGPRPSRIKKKK) are disordered. A compositionally biased stretch (basic residues) spans 101–122 (QKTKSNARTRKGPRPSRIKKKK).

This sequence belongs to the universal ribosomal protein uS13 family. In terms of assembly, part of the 30S ribosomal subunit. Forms a loose heterodimer with protein S19. Forms two bridges to the 50S subunit in the 70S ribosome.

Located at the top of the head of the 30S subunit, it contacts several helices of the 16S rRNA. In the 70S ribosome it contacts the 23S rRNA (bridge B1a) and protein L5 of the 50S subunit (bridge B1b), connecting the 2 subunits; these bridges are implicated in subunit movement. Contacts the tRNAs in the A and P-sites. The polypeptide is Small ribosomal subunit protein uS13 (Thermosipho melanesiensis (strain DSM 12029 / CIP 104789 / BI429)).